Consider the following 448-residue polypeptide: Phosphoglucosamine mutase (448 aa).

S100 acts as the Phosphoserine intermediate in catalysis. The Mg(2+) site is built by S100, D240, D242, and D244. A Phosphoserine modification is found at S100.

Belongs to the phosphohexose mutase family. Mg(2+) is required as a cofactor. Post-translationally, activated by phosphorylation.

The catalysed reaction is alpha-D-glucosamine 1-phosphate = D-glucosamine 6-phosphate. Its function is as follows. Catalyzes the conversion of glucosamine-6-phosphate to glucosamine-1-phosphate. The polypeptide is Phosphoglucosamine mutase (Clostridium perfringens (strain ATCC 13124 / DSM 756 / JCM 1290 / NCIMB 6125 / NCTC 8237 / Type A)).